A 52-amino-acid chain; its full sequence is Lantibiotic gallidermin (52 aa).

The propeptide occupies 1 to 30 (MEAVKEKNELFDLDVKVNAKESNDSGAEPR). Residues 33–37 (SKFLC) constitute a cross-link (lanthionine (Ser-Cys)). The segment at residues 38-41 (TPGC) is a cross-link (beta-methyllanthionine (Thr-Cys)). A (Z)-2,3-didehydrobutyrine modification is found at Thr44. Residues 46–51 (SFNSYC) constitute a cross-link (lanthionine (Ser-Cys)). Positions 49–52 (SYCC) form a cross-link, S-(2-aminovinyl)-D-cysteine (Ser-Cys).

Belongs to the type A lantibiotic family. Post-translationally, maturation of lantibiotics involves the enzymatic conversion of Thr, and Ser into dehydrated AA and the formation of thioether bonds with cysteine. The C-terminal lanthionine undergoes decarboxylation. This is followed by membrane translocation and cleavage of the modified precursor. In terms of processing, the structure of the 2,3-didehydrobutyrine is not discussed in PubMed:1932575. However, in Fig. 5 the NMR model appears to have the Z-isomer.

Its function is as follows. Lanthionine-containing peptide antibiotic (lantibiotic) active on Gram-positive bacteria. The bactericidal activity of lantibiotics is based on depolarization of energized bacterial cytoplasmic membranes, initiated by the formation of aqueous transmembrane pores. This Staphylococcus gallinarum protein is Lantibiotic gallidermin (gdmA).